The following is a 615-amino-acid chain: MADYNTLYQQGLYLSPDQQDLLLAALSSNNPTQKQQTVTHNSEANQNLNHTPGHASSGSFSVSPPSGLDGSVNQSTTFGYEDSPYLDLNPDFDLDFLGNESLIGDLPPSLPSTEDYEPGDKRKDIDGQVNDKEDSGKKRRESDEKAAKKPGRKPLTSEPTSKRKAQNRAAQRAFRERKEKHLKDLEAKVEELQKASDNANQENGLLRAQVERLQLELKEYRKRLSWVTSTSGLSPVNAIPGAYSKGMYGLNNNEFMFDFPKFGDLPGSHLFTNTQTSKSNQNKAKDNPTATPRSEAQVPGVLNRNDLKISSPNGLSNGPSPAKSTPSGQTPNSQTSTRPGSGTLNGAVDNNGAARGYQVNSSYSASTKQATHDTPSSDSPSSSSDSHQSQLLSSNGTSPEPSLHSPAVKATESSTPHACTYTTINGEESFCAQLSMACGNINNPIPAVRQNSESASNTPSHANSSDKALGLDFFAQQNGGQFDPVLFGDWREPQDAILSQDFGTFFDDAFPLPDLGSPSHNFSEATKQPAAPKKDLIAEIDSKLDEDEEVVPGEDKSQMLTCNKIWDRLQSMEKFRNGEIDVDNLCSELRTKARCSEGGVVVNQKDVEDIMGRVK.

Residues 27–50 show a composition bias toward polar residues; that stretch reads SSNNPTQKQQTVTHNSEANQNLNH. Disordered regions lie at residues 27–84 and 99–180; these read SSNN…EDSP and NESL…RKEK. A Bipartite nuclear localization signal motif is present at residues 35-42; that stretch reads QQTVTHNS. Over residues 52 to 67 the composition is skewed to low complexity; the sequence is PGHASSGSFSVSPPSG. The Bipartite nuclear localization signal signature appears at 68 to 75; it reads LDGSVNQS. Positions 118–147 are enriched in basic and acidic residues; the sequence is PGDKRKDIDGQVNDKEDSGKKRRESDEKAA. One can recognise a bZIP domain in the interval 157 to 220; the sequence is SEPTSKRKAQ…ERLQLELKEY (64 aa). Residues 162–183 are basic motif; sequence KRKAQNRAAQRAFRERKEKHLK. The interval 185–192 is leucine-zipper; that stretch reads LEAKVEEL. A transcription activation 1 region spans residues 214–364; the sequence is QLELKEYRKR…RGYQVNSSYS (151 aa). Polar residues predominate over residues 270-294; sequence LFTNTQTSKSNQNKAKDNPTATPRS. A disordered region spans residues 270–416; it reads LFTNTQTSKS…AVKATESSTP (147 aa). Positions 289–301 are n-CRD; sequence TATPRSEAQVPGV. The segment covering 310–321 has biased composition (low complexity); it reads SSPNGLSNGPSP. Polar residues-rich tracts occupy residues 322-344 and 358-369; these read AKSTPSGQTPNSQTSTRPGSGTL and QVNSSYSASTKQ. Positions 372-394 are enriched in low complexity; sequence HDTPSSDSPSSSSDSHQSQLLSS. The interval 409 to 508 is transcription activation 2; sequence KATESSTPHA…SQDFGTFFDD (100 aa). Disulfide bonds link Cys-562–Cys-586, Cys-562–Cys-595, and Cys-586–Cys-595. Residues 562–595 form a c-CRD region; the sequence is CNKIWDRLQSMEKFRNGEIDVDNLCSELRTKARC. Residues 580-587 carry the Nuclear export signal motif; sequence IDVDNLCS.

Belongs to the bZIP family. YAP subfamily. Post-translationally, depending on the oxidative stress inducing agent, yap1 can undergo two distinct conformational changes, both involving disulfide bond formation, and both masking the nuclear export signal, thus abolishing nuclear export.

The protein resides in the nucleus. It localises to the cytoplasm. In terms of biological role, transcription activator involved in oxidative stress response and redox homeostasis. Regulates the transcription of genes encoding antioxidant enzymes and components of the cellular thiol-reducing pathways, including thioredoxin peroxidase (aspF3), cytochrome peroxidase, and the protein AFUA_3G00730, which appears to belong to the glutathione S-transferase family. Proteins of the protein degradation pathway are also regulated by yap1, as well the p-nitroreductase family protein AFUA_5G09910. May be involved in antifungal resistance to voriconazole. In Aspergillus fumigatus (strain ATCC MYA-4609 / CBS 101355 / FGSC A1100 / Af293) (Neosartorya fumigata), this protein is AP-1-like transcription factor yap1.